We begin with the raw amino-acid sequence, 315 residues long: Protein ORANGE-LIKE, chloroplastic (315 aa).

The transit peptide at 1 to 16 directs the protein to the chloroplast; that stretch reads MTCFSSATPHRHHLLL. The next 2 helical transmembrane spans lie at 155-175 and 207-227; these read LYST…LIAP and IVAS…LIEV. The segment at 225–307 adopts a CR-type zinc-finger fold; that stretch reads IEVNNVKQQE…CTGMVTASEH (83 aa). Residues 238 to 245 form a CXXCXGXG motif repeat; that stretch reads CKYCLGTG. The CXXCXXXG motif repeat unit spans residues 249-256; sequence CARCSASG. A CXXCXGXG motif repeat occupies 282-289; it reads CLNCSGAG. The CXXCXXXG motif repeat unit spans residues 293–300; sequence CPTCLCTG.

The protein belongs to the orange-like family. In terms of assembly, interacts with PSY1.

The protein resides in the plastid. Its subcellular location is the chloroplast membrane. Its function is as follows. May be associated with accumulation of carotenoids in chromoplasts. In Arabidopsis thaliana (Mouse-ear cress), this protein is Protein ORANGE-LIKE, chloroplastic (ORLIKE).